The following is a 463-amino-acid chain: L-seryl-tRNA(Sec) selenium transferase (463 aa).

Lys-295 is modified (N6-(pyridoxal phosphate)lysine).

It belongs to the SelA family. Homodecamer; pentamer of dimers. Binds only one seryl-tRNA(Sec) per dimer. Requires pyridoxal 5'-phosphate as cofactor.

Its subcellular location is the cytoplasm. It carries out the reaction L-seryl-tRNA(Sec) + selenophosphate + H(+) = L-selenocysteinyl-tRNA(Sec) + phosphate. It functions in the pathway aminoacyl-tRNA biosynthesis; selenocysteinyl-tRNA(Sec) biosynthesis; selenocysteinyl-tRNA(Sec) from L-seryl-tRNA(Sec) (bacterial route): step 1/1. In terms of biological role, converts seryl-tRNA(Sec) to selenocysteinyl-tRNA(Sec) required for selenoprotein biosynthesis. In Shigella flexneri serotype 5b (strain 8401), this protein is L-seryl-tRNA(Sec) selenium transferase.